The following is a 271-amino-acid chain: (21S)-21-acetoxyl-apo-melianone synthase SDR (271 aa).

S150 acts as the Proton donor in catalysis. The active-site Proton acceptor is the Y163. K167 functions as the Proton donor/acceptor in the catalytic mechanism.

It belongs to the short-chain dehydrogenases/reductases (SDR) family. Mainly expressed in petioles.

The catalysed reaction is 21-O-acetyl-isomeliandiol + A = (21S)-21-acetoxyl-apo-melianone + AH2. It participates in secondary metabolite biosynthesis; terpenoid biosynthesis. Oxidoreductase involved in the biosynthesis of limonoids triterpene natural products such as azadirachtin, an antifeedant widely used as bioinsecticide, and possessing many medicinal applications including anti-tumoral, anti-malarial, anti-rheumatic, antibacterial, anti-inflammatory, anti-pyretic and diuretic effects. Catalyzes the oxidation of 21-O-acetyl-isomeliandiol to (21S)-21-acetoxyl-apo-melianone. This chain is (21S)-21-acetoxyl-apo-melianone synthase SDR, found in Melia azedarach (Chinaberry tree).